A 76-amino-acid polypeptide reads, in one-letter code: Rhesus theta defensin-1/3 subunit A (76 aa).

The signal sequence occupies residues 1–22 (MRTFALLTAMLLLVALHAQAEA). Positions 23 to 64 (RQARADEAAAQQQPGTDDQGMAHSFTWPENAALPLSESAKGL) are excised as a propeptide. Positions 25–45 (ARADEAAAQQQPGTDDQGMAH) are disordered. Arg-65 is covalently cross-linked (Cyclopeptide (Arg-Cys) (interchain with C-73 in subunit A); in form RTD-3). Residue Arg-65 forms a Cyclopeptide (Arg-Cys) (interchain with C-73 in subunit B); in form RTD-1 linkage. Cysteines 68 and 73 form a disulfide. Cys-73 is covalently cross-linked (Cyclopeptide (Cys-Arg) (interchain with R-65 in subunit A); in form RTD-3). Cys-73 participates in a covalent cross-link: Cyclopeptide (Cys-Arg) (interchain with R-65 in subunit B); in form RTD-1. The propeptide occupies 74 to 76 (RLL).

The protein belongs to the alpha-defensin family. Theta subfamily. In terms of assembly, RTD-1 is a cyclic heterodimer composed of subunits A and B; disulfide-linked. RTD-3 is a cyclic homodimer composed of two subunits A; disulfide-linked. Post-translationally, forms a cyclic peptide with subunit A (RTD-3) or with subunit B (RTD-1). An additional intersubunit disulfide bond is formed. As to expression, RTD-1 is expressed in bone marrow. Detected in promyelocytes, myelocytes and mature neutrophils and monocytes.

RTD-1 and RTD-3 have similar antimicrobial activities against the Gram-positive bacteria S.aureus 502A and L.monocytogenes, the Gram-negative bacteria S.typhimurium and E.coli ML35, and the fungi C.albicans 16820 and C.neoformans 271A. The polypeptide is Rhesus theta defensin-1/3 subunit A (RTD1A) (Macaca mulatta (Rhesus macaque)).